A 196-amino-acid chain; its full sequence is Oplophorus-luciferin 2-monooxygenase catalytic subunit (196 aa).

The first 27 residues, 1–27 (MAYSTLFIIALTAVVTQASSTQKSNLT), serve as a signal peptide directing secretion.

Heterotetramer of a catalytic 19 kDa and a non-catalytic 35 kDa subunit.

The protein resides in the secreted. The enzyme catalyses coelenterazine + O2 = coelenteramide + hnu + CO2. Inhibited by micromolar Cu(2+). Catalytic subunit of oplophorus-luciferin 2-monooxygenase. Oxidoreductase that converts coelenterazine (the oplophorus luciferin) to coelenteramide under emission of blue light with a maximum at 454 nm. Is also active with bisdeoxycoelenterazine. This is Oplophorus-luciferin 2-monooxygenase catalytic subunit from Oplophorus gracilirostris (Luminous shrimp).